The primary structure comprises 724 residues: Phenylalanine ammonia-lyase (724 aa).

The active-site Proton donor/acceptor is the Y99. Positions 204–206 form a cross-link, 5-imidazolinone (Ala-Gly); it reads ASG. A 2,3-didehydroalanine (Ser) modification is found at S205. Residues N265, Q355, R361, N391, K462, E490, and N493 each contribute to the (E)-cinnamate site.

Belongs to the PAL/histidase family. Homotetramer. Post-translationally, contains an active site 4-methylidene-imidazol-5-one (MIO), which is formed autocatalytically by cyclization and dehydration of residues Ala-Ser-Gly.

It is found in the cytoplasm. It carries out the reaction L-phenylalanine = (E)-cinnamate + NH4(+). It participates in phenylpropanoid metabolism; trans-cinnamate biosynthesis; trans-cinnamate from L-phenylalanine: step 1/1. Its function is as follows. Catalyzes the non-oxidative deamination of L-phenylalanine to form trans-cinnamic acid and a free ammonium ion. Facilitates the commitment step in phenylpropanoid pathways that produce secondary metabolites such as lignins, coumarins and flavonoids. The polypeptide is Phenylalanine ammonia-lyase (Flammulina velutipes (Agaricus velutipes)).